The chain runs to 270 residues: Ribosomal RNA small subunit methyltransferase A (270 aa).

S-adenosyl-L-methionine contacts are provided by Asn-18, Leu-20, Gly-45, Glu-66, Asp-91, and Asn-112.

It belongs to the class I-like SAM-binding methyltransferase superfamily. rRNA adenine N(6)-methyltransferase family. RsmA subfamily.

The protein resides in the cytoplasm. The enzyme catalyses adenosine(1518)/adenosine(1519) in 16S rRNA + 4 S-adenosyl-L-methionine = N(6)-dimethyladenosine(1518)/N(6)-dimethyladenosine(1519) in 16S rRNA + 4 S-adenosyl-L-homocysteine + 4 H(+). Its function is as follows. Specifically dimethylates two adjacent adenosines (A1518 and A1519) in the loop of a conserved hairpin near the 3'-end of 16S rRNA in the 30S particle. May play a critical role in biogenesis of 30S subunits. The chain is Ribosomal RNA small subunit methyltransferase A from Psychromonas ingrahamii (strain DSM 17664 / CCUG 51855 / 37).